The primary structure comprises 376 residues: Deoxyuridine 5'-triphosphate nucleotidohydrolase (376 aa).

The protein belongs to the dUTPase family. Mg(2+) serves as cofactor.

It carries out the reaction dUTP + H2O = dUMP + diphosphate + H(+). Involved in nucleotide metabolism: produces dUMP, the immediate precursor of thymidine nucleotides and decreases the intracellular concentration of dUTP to avoid uracil incorporation into viral DNA. This is Deoxyuridine 5'-triphosphate nucleotidohydrolase from Human herpesvirus 6B (strain Z29) (HHV-6 variant B).